A 566-amino-acid polypeptide reads, in one-letter code: Tetratricopeptide repeat protein 34 (566 aa).

The disordered stretch occupies residues 1–29 (MLQRSPRAGPSRAQGRREAAETGGPTTQE). TPR repeat units follow at residues 50–83 (EASRLLAADALYRLGRLEETHKALLVALSRRPQA), 178–211 (SESLLARARCYGFLGQKKTAMFDFNTVLRAEPGN), 212–245 (VQALCGRALVHLALDQLQEAVDDIVSALKLGPGT), 306–339 (PHWHLLLADILMAQGSYEEAGTHLEKALHRAPTS), 341–373 (AARARLGLLQLKKGDVPGAARDLQSLAEVDAPD), 424–457 (ACHLRLRATCLAELQEFGRALRDLDHVLQEALGD), 464–497 (AEDFCRQGRLLLSLGDEAAAAGAFAQALKLAPSL), and 512–545 (ARMFLLRGQCCLEEQRHAEAWTAVESGLLVDPDH).

The polypeptide is Tetratricopeptide repeat protein 34 (TTC34) (Homo sapiens (Human)).